The following is a 466-amino-acid chain: Asparagine--tRNA ligase (466 aa).

This sequence belongs to the class-II aminoacyl-tRNA synthetase family. In terms of assembly, homodimer.

It is found in the cytoplasm. It catalyses the reaction tRNA(Asn) + L-asparagine + ATP = L-asparaginyl-tRNA(Asn) + AMP + diphosphate + H(+). This chain is Asparagine--tRNA ligase, found in Salmonella paratyphi A (strain ATCC 9150 / SARB42).